A 319-amino-acid chain; its full sequence is N-acyl-aromatic-L-amino acid amidohydrolase (carboxylate-forming) (319 aa).

The interval 1–210 is hydrolytic domain; it reads MCSLPGSRKP…SILDFIELFN (210 aa). Residues His-21 and Glu-24 each contribute to the Zn(2+) site. Substrate-binding positions include Arg-63 and 70 to 71; that span reads NR. His-116 provides a ligand contact to Zn(2+). Substrate contacts are provided by Glu-178 and Tyr-288. The interval 211–318 is shielding domain; that stretch reads QGMEFPAFEM…PGLTPSSTQT (108 aa). Thr-318 bears the Phosphothreonine mark.

This sequence belongs to the AspA/AstE family. Aspartoacylase subfamily. In terms of assembly, exists as a mixture of homodimers and homotetramer, both catalytically active. Requires Zn(2+) as cofactor.

The protein localises to the apical cell membrane. It is found in the cytoplasm. The enzyme catalyses an N-acyl-aromatic L-alpha-amino acid + H2O = an aromatic L-alpha-amino acid + a carboxylate. The catalysed reaction is an N-acetyl-L-cysteine-S-conjugate + H2O = an S-substituted L-cysteine + acetate. Plays an important role in deacetylating mercapturic acids in kidney proximal tubules. Also acts on N-acetyl-aromatic amino acids. The sequence is that of N-acyl-aromatic-L-amino acid amidohydrolase (carboxylate-forming) (Acy3) from Rattus norvegicus (Rat).